The sequence spans 91 residues: Large ribosomal subunit protein eL43 (91 aa).

A C4-type zinc finger spans residues 39–60 (CSFCGKEAMKRKATGIWNCAKC).

It belongs to the eukaryotic ribosomal protein eL43 family.

The protein is Large ribosomal subunit protein eL43 of Caenorhabditis elegans.